A 66-amino-acid chain; its full sequence is ATP synthase protein 8 (66 aa).

The chain crosses the membrane as a helical span at residues 8-24; it reads PWPMVIMSMILTLFYIT. Lysine 54 bears the N6-acetyllysine; alternate mark. An N6-succinyllysine; alternate modification is found at lysine 54. Lysine 57 is subject to N6-acetyllysine.

The protein belongs to the ATPase protein 8 family. In terms of assembly, F-type ATPases have 2 components, CF(1) - the catalytic core - and CF(0) - the membrane proton channel. Component of an ATP synthase complex composed of ATP5PB, ATP5MC1, ATP5F1E, ATP5PD, ATP5ME, ATP5PF, ATP5MF, MT-ATP6, MT-ATP8, ATP5F1A, ATP5F1B, ATP5F1D, ATP5F1C, ATP5PO, ATP5MG, ATP5MK and ATP5MJ. Interacts with PRICKLE3.

It localises to the mitochondrion membrane. Mitochondrial membrane ATP synthase (F(1)F(0) ATP synthase or Complex V) produces ATP from ADP in the presence of a proton gradient across the membrane which is generated by electron transport complexes of the respiratory chain. F-type ATPases consist of two structural domains, F(1) - containing the extramembraneous catalytic core and F(0) - containing the membrane proton channel, linked together by a central stalk and a peripheral stalk. During catalysis, ATP synthesis in the catalytic domain of F(1) is coupled via a rotary mechanism of the central stalk subunits to proton translocation. Part of the complex F(0) domain. Minor subunit located with subunit a in the membrane. In Alouatta guariba (Brown howler monkey), this protein is ATP synthase protein 8 (MT-ATP8).